The following is a 229-amino-acid chain: Transmembrane protein 182 (229 aa).

Residues 1 to 26 form the signal peptide; it reads MRLNVAVFFGALFGALGVLLFLVAFG. At 27–114 the chain is on the extracellular side; it reads SDYWLLATEV…SYDSAIIYRG (88 aa). N47 is a glycosylation site (N-linked (GlcNAc...) asparagine). Residues 49–59 are interaction with ITGB1; sequence TFHHEGFFWRC. N-linked (GlcNAc...) asparagine glycosylation is found at N68, N85, and N102. A helical transmembrane segment spans residues 115–135; sequence FWAVLLLLGVVAALTASFLII. Residues 136 to 153 are Cytoplasmic-facing; that stretch reads CAAPFSSHFLYKAGGGSY. The chain crosses the membrane as a helical span at residues 154–174; sequence IASGVLFSLVVILYVIWVQAV. Topologically, residues 175–200 are extracellular; that stretch reads ADMESYRALRMRDCWEFTPSILYGWS. Residues 201 to 221 form a helical membrane-spanning segment; sequence FFLAPAGVFFSLLAGLLFLVV. Residues 222 to 229 lie on the Cytoplasmic side of the membrane; that stretch reads GRHIQIHH.

Belongs to the TMEM182 family. As to quaternary structure, interacts with ITGB1. As to expression, highly expressed in white adipose tissues (WAT), with 10-fold to 20-fold higher levels than in brown adipose tissue (BAT). Also expressed in skeletal muscle, heart and lung. Lower relative levels of expression in kidney, spleen, testis, brain and liver.

The protein resides in the cell membrane. Functionally, negatively regulates myogenesis and skeletal muscle regeneration via its association with ITGB1. Modulates ITGB1 activation by decreasing ITGB1-LAMB1 interaction and inhibiting ITGB1-mediated intracellular signaling during myogenesis. The protein is Transmembrane protein 182 (Tmem182) of Mus musculus (Mouse).